The sequence spans 251 residues: Triosephosphate isomerase (251 aa).

9 to 11 (NWK) provides a ligand contact to substrate. The active-site Electrophile is the His-95. Catalysis depends on Glu-167, which acts as the Proton acceptor. Substrate-binding positions include Gly-173, Ser-212, and 233–234 (GG).

It belongs to the triosephosphate isomerase family. As to quaternary structure, homodimer.

Its subcellular location is the cytoplasm. The catalysed reaction is D-glyceraldehyde 3-phosphate = dihydroxyacetone phosphate. It functions in the pathway carbohydrate biosynthesis; gluconeogenesis. Its pathway is carbohydrate degradation; glycolysis; D-glyceraldehyde 3-phosphate from glycerone phosphate: step 1/1. Its function is as follows. Involved in the gluconeogenesis. Catalyzes stereospecifically the conversion of dihydroxyacetone phosphate (DHAP) to D-glyceraldehyde-3-phosphate (G3P). The protein is Triosephosphate isomerase of Pseudomonas paraeruginosa (strain DSM 24068 / PA7) (Pseudomonas aeruginosa (strain PA7)).